Reading from the N-terminus, the 473-residue chain is MKILYSQRRFYHVEMPFNNRIEFAGRSIESTGYAWWAGNARLINVSGKLLGAHVAHAGLIVFWTGAMTLFEVAHFLPEKPLYEQGCILLPHLATLGWGVGPTGEIIDTYPYFVIGVLHLVSSAVLGFGGLYHSLIGPEILEESYPFFGYDWRDKNKMTTILGIHLILLGIGAFLLVIKAMFFGGVYDTWAPGGGDVRYINNPTLNPLVIFGYLLKSPFGGDGWIISVNNMEDLIGGHIWIGLICIGGGIWHILTKPFGWARRAFVWSGEAYLSYSLAALSLMGFIACIYVWYNNTAYPSEFYGPTGPEASQAQAFTFLVRDQRLGENVASAQGPTGLGKYLMRSPSGEVIFGGETMRFWDLRAPWLEPLRGPNGLDLNKIKNDIQPWQERRAAEYMTHAPLGSINSVGGVATEINSFNYVSPRSWLTTSHFVLGFFLFVAHLWHAGRARAAAAGFEKGINRENEPVLSMKLID.

Residues 1 to 14 (MKILYSQRRFYHVE) constitute a propeptide that is removed on maturation. The next 5 membrane-spanning stretches (helical) occupy residues 69–93 (LFEVAHFLPEKPLYEQGCILLPHLA), 134–155 (LIGPEILEESYPFFGYDWRDKN), 178–200 (KAMFFGGVYDTWAPGGGDVRYIN), 255–275 (KPFGWARRAFVWSGEAYLSYS), and 291–312 (WYNNTAYPSEFYGPTGPEASQA). Glu-367 provides a ligand contact to [CaMn4O5] cluster. Residues 447–471 (RARAAAAGFEKGINRENEPVLSMKL) traverse the membrane as a helical segment.

The protein belongs to the PsbB/PsbC family. PsbC subfamily. As to quaternary structure, PSII is composed of 1 copy each of membrane proteins PsbA, PsbB, PsbC, PsbD, PsbE, PsbF, PsbH, PsbI, PsbJ, PsbK, PsbL, PsbM, PsbT, PsbY, PsbZ, Psb30/Ycf12, at least 3 peripheral proteins of the oxygen-evolving complex and a large number of cofactors. It forms dimeric complexes. Requires Binds multiple chlorophylls and provides some of the ligands for the Ca-4Mn-5O cluster of the oxygen-evolving complex. It may also provide a ligand for a Cl- that is required for oxygen evolution. PSII binds additional chlorophylls, carotenoids and specific lipids. as cofactor.

The protein localises to the plastid. Its subcellular location is the chloroplast thylakoid membrane. In terms of biological role, one of the components of the core complex of photosystem II (PSII). It binds chlorophyll and helps catalyze the primary light-induced photochemical processes of PSII. PSII is a light-driven water:plastoquinone oxidoreductase, using light energy to abstract electrons from H(2)O, generating O(2) and a proton gradient subsequently used for ATP formation. The protein is Photosystem II CP43 reaction center protein of Galdieria sulphuraria (Red alga).